A 664-amino-acid polypeptide reads, in one-letter code: uncharacterized protein (664 aa).

This is an uncharacterized protein from Sinorhizobium fredii (strain NBRC 101917 / NGR234).